We begin with the raw amino-acid sequence, 514 residues long: ATP synthase subunit alpha (514 aa).

170-177 (GDRQIGKT) contributes to the ATP binding site.

This sequence belongs to the ATPase alpha/beta chains family. In terms of assembly, F-type ATPases have 2 components, CF(1) - the catalytic core - and CF(0) - the membrane proton channel. CF(1) has five subunits: alpha(3), beta(3), gamma(1), delta(1), epsilon(1). CF(0) has three main subunits: a(1), b(2) and c(9-12). The alpha and beta chains form an alternating ring which encloses part of the gamma chain. CF(1) is attached to CF(0) by a central stalk formed by the gamma and epsilon chains, while a peripheral stalk is formed by the delta and b chains.

It is found in the cell inner membrane. The enzyme catalyses ATP + H2O + 4 H(+)(in) = ADP + phosphate + 5 H(+)(out). In terms of biological role, produces ATP from ADP in the presence of a proton gradient across the membrane. The alpha chain is a regulatory subunit. The polypeptide is ATP synthase subunit alpha (Alcanivorax borkumensis (strain ATCC 700651 / DSM 11573 / NCIMB 13689 / SK2)).